Here is a 222-residue protein sequence, read N- to C-terminus: Kinetochore protein Spc25 (222 aa).

A coiled-coil region spans residues 51-86 (RHQRKVGKLQKVLMERREELDKRVSFIEELDRELEA).

Belongs to the SPC25 family. As to quaternary structure, component of the Ndc80 complex, which is composed of Ndc80, Nuf2 and Spc25.

It is found in the nucleus. It localises to the chromosome. The protein localises to the centromere. Its subcellular location is the kinetochore. Functionally, acts as a component of the essential kinetochore-associated Ndc80 complex, which is required for chromosome segregation and spindle checkpoint activity during meiosis and mitosis. Required for kinetochore integrity and the organization of stable microtubule binding sites in the outer plate of the kinetochore. Participates in SAC signaling that responds specifically to disruptions in spindle microtubule dynamics. The NDC80 complex synergistically enhances the affinity of the SKA1 complex for microtubules and may allow the NDC80 complex to track depolymerizing microtubules. This Drosophila simulans (Fruit fly) protein is Kinetochore protein Spc25.